The chain runs to 505 residues: One cut domain family member 2 (505 aa).

Disordered stretches follow at residues 29–94 (LGTL…GTAA), 165–190 (KFHHPHPHHHPHHHHHHHHHHQRLSG), and 275–333 (EQHL…QLEE). The span at 35–56 (PVGGGSGGGGGGGGGGGGGGPG) shows a compositional bias: gly residues. A compositionally biased stretch (basic residues) spans 167 to 187 (HHPHPHHHPHHHHHHHHHHQR). A DNA-binding region (CUT) is located at residues 325–411 (VATSGQLEEI…QRMSALRLAA (87 aa)). The segment at residues 427-486 (QKKSRLVFTDLQRRTLFAIFKENKRPSKEMQITISQQLGLELTTVSNFFMNARRRSLEKW) is a DNA-binding region (homeobox).

The protein belongs to the CUT homeobox family.

The protein localises to the nucleus. Functionally, transcriptional activator. Activates the transcription of a number of liver genes such as HNF3B. This Mus musculus (Mouse) protein is One cut domain family member 2 (Onecut2).